We begin with the raw amino-acid sequence, 145 residues long: Cell wall teichoic acid glycosylation protein GtcA (145 aa).

The next 4 membrane-spanning stretches (helical) occupy residues 21–41 (IFMYLIMGGFTTIINIVTFWL), 45–65 (ILNWDYRIANTIAFIASVLFA), 91–111 (FFGFRCLTYIIDILVMILLIS), and 122–142 (IWTNIIVLVLNYVFSKWIIFK).

The protein belongs to the GtrA family.

The protein resides in the cell membrane. Its function is as follows. Involved in the decoration of cell wall teichoic acid with galactose and glucose. The sequence is that of Cell wall teichoic acid glycosylation protein GtcA (gtcA) from Listeria monocytogenes.